Consider the following 593-residue polypeptide: Translation initiation factor IF-2 (593 aa).

In terms of domain architecture, tr-type G spans 101–270 (LRPPVVTIMG…LLIAELEDLR (170 aa)). Residues 110–117 (GHVDHGKT) form a G1 region. 110 to 117 (GHVDHGKT) provides a ligand contact to GTP. The tract at residues 135 to 139 (GITQH) is G2. A G3 region spans residues 156-159 (DTPG). GTP-binding positions include 156 to 160 (DTPGH) and 210 to 213 (NKMD). Residues 210-213 (NKMD) are G4. Positions 246–248 (SAR) are G5.

The protein belongs to the TRAFAC class translation factor GTPase superfamily. Classic translation factor GTPase family. IF-2 subfamily.

Its subcellular location is the cytoplasm. One of the essential components for the initiation of protein synthesis. Protects formylmethionyl-tRNA from spontaneous hydrolysis and promotes its binding to the 30S ribosomal subunits. Also involved in the hydrolysis of GTP during the formation of the 70S ribosomal complex. The chain is Translation initiation factor IF-2 from Dehalococcoides mccartyi (strain CBDB1).